A 530-amino-acid chain; its full sequence is Light-independent protochlorophyllide reductase subunit B (530 aa).

A [4Fe-4S] cluster-binding site is contributed by D36. The active-site Proton donor is the D290. 425–426 (GL) provides a ligand contact to substrate. Residues 448 to 483 (LGHLGGHASETKTSSKGINQSPNNHSPAGESIHWTS) are disordered. Residues 458-473 (TKTSSKGINQSPNNHS) are compositionally biased toward polar residues.

It belongs to the ChlB/BchB/BchZ family. As to quaternary structure, protochlorophyllide reductase is composed of three subunits; ChlL, ChlN and ChlB. Forms a heterotetramer of two ChlB and two ChlN subunits. The cofactor is [4Fe-4S] cluster.

The catalysed reaction is chlorophyllide a + oxidized 2[4Fe-4S]-[ferredoxin] + 2 ADP + 2 phosphate = protochlorophyllide a + reduced 2[4Fe-4S]-[ferredoxin] + 2 ATP + 2 H2O. Its pathway is porphyrin-containing compound metabolism; chlorophyll biosynthesis (light-independent). In terms of biological role, component of the dark-operative protochlorophyllide reductase (DPOR) that uses Mg-ATP and reduced ferredoxin to reduce ring D of protochlorophyllide (Pchlide) to form chlorophyllide a (Chlide). This reaction is light-independent. The NB-protein (ChlN-ChlB) is the catalytic component of the complex. In Prochlorococcus marinus (strain SARG / CCMP1375 / SS120), this protein is Light-independent protochlorophyllide reductase subunit B.